A 263-amino-acid polypeptide reads, in one-letter code: 5'-nucleotidase SurE (263 aa).

Asp-8, Asp-9, Ser-43, and Asn-96 together coordinate a divalent metal cation.

Belongs to the SurE nucleotidase family. A divalent metal cation is required as a cofactor.

It localises to the cytoplasm. It carries out the reaction a ribonucleoside 5'-phosphate + H2O = a ribonucleoside + phosphate. In terms of biological role, nucleotidase that shows phosphatase activity on nucleoside 5'-monophosphates. The polypeptide is 5'-nucleotidase SurE (Jannaschia sp. (strain CCS1)).